Here is a 393-residue protein sequence, read N- to C-terminus: NAD(P)H-quinone oxidoreductase subunit H, chloroplastic (393 aa).

The protein belongs to the complex I 49 kDa subunit family. NDH is composed of at least 16 different subunits, 5 of which are encoded in the nucleus.

It localises to the plastid. The protein localises to the chloroplast thylakoid membrane. The enzyme catalyses a plastoquinone + NADH + (n+1) H(+)(in) = a plastoquinol + NAD(+) + n H(+)(out). It catalyses the reaction a plastoquinone + NADPH + (n+1) H(+)(in) = a plastoquinol + NADP(+) + n H(+)(out). Functionally, NDH shuttles electrons from NAD(P)H:plastoquinone, via FMN and iron-sulfur (Fe-S) centers, to quinones in the photosynthetic chain and possibly in a chloroplast respiratory chain. The immediate electron acceptor for the enzyme in this species is believed to be plastoquinone. Couples the redox reaction to proton translocation, and thus conserves the redox energy in a proton gradient. The chain is NAD(P)H-quinone oxidoreductase subunit H, chloroplastic from Oenothera biennis (German evening primrose).